The chain runs to 65 residues: Large ribosomal subunit protein bL33m (65 aa).

A mitochondrion-targeting transit peptide spans 1–8; it reads MLLSAVSF.

The protein belongs to the bacterial ribosomal protein bL33 family. In terms of assembly, component of the mitochondrial ribosome large subunit (39S) which comprises a 16S rRNA and about 50 distinct proteins.

It localises to the mitochondrion. This Mus musculus (Mouse) protein is Large ribosomal subunit protein bL33m (Mrpl33).